The primary structure comprises 147 residues: Large ribosomal subunit protein bL9 (147 aa).

Belongs to the bacterial ribosomal protein bL9 family.

In terms of biological role, binds to the 23S rRNA. This Campylobacter jejuni subsp. jejuni serotype O:6 (strain 81116 / NCTC 11828) protein is Large ribosomal subunit protein bL9.